A 614-amino-acid chain; its full sequence is 1-deoxy-D-xylulose-5-phosphate synthase (614 aa).

Residues histidine 74 and 115 to 117 each bind thiamine diphosphate; that span reads AHS. Residue aspartate 146 coordinates Mg(2+). Residues 147–148, asparagine 175, tyrosine 282, and glutamate 363 contribute to the thiamine diphosphate site; that span reads GA. Residue asparagine 175 participates in Mg(2+) binding.

This sequence belongs to the transketolase family. DXPS subfamily. In terms of assembly, homodimer. The cofactor is Mg(2+). Thiamine diphosphate serves as cofactor.

It carries out the reaction D-glyceraldehyde 3-phosphate + pyruvate + H(+) = 1-deoxy-D-xylulose 5-phosphate + CO2. It participates in metabolic intermediate biosynthesis; 1-deoxy-D-xylulose 5-phosphate biosynthesis; 1-deoxy-D-xylulose 5-phosphate from D-glyceraldehyde 3-phosphate and pyruvate: step 1/1. In terms of biological role, catalyzes the acyloin condensation reaction between C atoms 2 and 3 of pyruvate and glyceraldehyde 3-phosphate to yield 1-deoxy-D-xylulose-5-phosphate (DXP). The sequence is that of 1-deoxy-D-xylulose-5-phosphate synthase from Nitrosomonas europaea (strain ATCC 19718 / CIP 103999 / KCTC 2705 / NBRC 14298).